The sequence spans 262 residues: Ribosome-recycling factor, mitochondrial (262 aa).

A mitochondrion-targeting transit peptide spans 1 to 55; it reads MALGLKCFRMVHPTFRNYLAASIRPVSEVTLKTVHERQHGHRQYMAYSAVPVRHF.

Belongs to the RRF family.

The protein resides in the mitochondrion. Functionally, responsible for the disassembly of ribosomes from messenger RNA at the termination of mitochondrial protein biosynthesis. Acts in collaboration with GFM2. Promotes mitochondrial ribosome recycling by dissolution of intersubunit contacts. The sequence is that of Ribosome-recycling factor, mitochondrial from Homo sapiens (Human).